Consider the following 114-residue polypeptide: Small ribosomal subunit protein uS17 (114 aa).

The protein belongs to the universal ribosomal protein uS17 family. Part of the 30S ribosomal subunit.

Its function is as follows. One of the primary rRNA binding proteins, it binds specifically to the 5'-end of 16S ribosomal RNA. The protein is Small ribosomal subunit protein uS17 of Aeropyrum pernix (strain ATCC 700893 / DSM 11879 / JCM 9820 / NBRC 100138 / K1).